A 92-amino-acid polypeptide reads, in one-letter code: Progonadoliberin-1 (92 aa).

Residues 1-23 (MGLIPKLLAGLVLLTLCVENGSG) form the signal peptide. The residue at position 24 (Q24) is a Pyrrolidone carboxylic acid. Glycine amide is present on G33.

The protein belongs to the GnRH family. The precursor is cleaved by ACE, which removes the Gly-Lys-Arg peptide at the C-terminus, leading to mature hormone. The mature form of Gonadoliberin-1 is also cleaved and degraded by ACE.

The protein resides in the secreted. In terms of biological role, stimulates the secretion of gonadotropins; it stimulates the secretion of both luteinizing and follicle-stimulating hormones. The polypeptide is Progonadoliberin-1 (GNRH1) (Cavia porcellus (Guinea pig)).